Reading from the N-terminus, the 172-residue chain is Putative phosphoesterase BC_1225 (172 aa).

The active-site Proton donor is histidine 34. 2 consecutive short sequence motifs (HXTX) follow at residues histidine 34–leucine 37 and histidine 115–isoleucine 118. Histidine 115 functions as the Proton acceptor in the catalytic mechanism.

It belongs to the 2H phosphoesterase superfamily. YjcG family.

The protein is Putative phosphoesterase BC_1225 of Bacillus cereus (strain ATCC 14579 / DSM 31 / CCUG 7414 / JCM 2152 / NBRC 15305 / NCIMB 9373 / NCTC 2599 / NRRL B-3711).